The primary structure comprises 354 residues: uncharacterized protein (354 aa).

Disordered stretches follow at residues 1–74 (MGTK…ENCR) and 87–115 (SESG…QRAS). At lysine 19 the chain carries N6-acetyllysine. Residues 32-41 (EGPSSNSSFH) show a composition bias toward low complexity. Residues 45–54 (EEGTDLEGDM) show a composition bias toward acidic residues. A phosphoserine mark is found at serine 115 and serine 174. Over residues 182 to 199 (QGSSQDLPMQANLSQSNE) the composition is skewed to polar residues. 2 disordered regions span residues 182-208 (QGSS…GRDR) and 235-298 (QVAD…DELS). Tyrosine 291 is subject to Phosphotyrosine. A Phosphoserine modification is found at serine 292.

This is an uncharacterized protein from Mus musculus (Mouse).